Reading from the N-terminus, the 307-residue chain is tRNA pseudouridine synthase B (307 aa).

D38 serves as the catalytic Nucleophile.

Belongs to the pseudouridine synthase TruB family. Type 1 subfamily.

It catalyses the reaction uridine(55) in tRNA = pseudouridine(55) in tRNA. Responsible for synthesis of pseudouridine from uracil-55 in the psi GC loop of transfer RNAs. The protein is tRNA pseudouridine synthase B of Lachnoclostridium phytofermentans (strain ATCC 700394 / DSM 18823 / ISDg) (Clostridium phytofermentans).